A 272-amino-acid polypeptide reads, in one-letter code: Formamidopyrimidine-DNA glycosylase (272 aa).

P2 acts as the Schiff-base intermediate with DNA in catalysis. Catalysis depends on E3, which acts as the Proton donor. K58 (proton donor; for beta-elimination activity) is an active-site residue. Residues H93, R112, and R153 each coordinate DNA. Residues 238–272 form an FPG-type zinc finger; it reads HVYGKSGQHCPKCGNILEDLKISNRGTVYCPHCQR. R262 functions as the Proton donor; for delta-elimination activity in the catalytic mechanism.

The protein belongs to the FPG family. Monomer. It depends on Zn(2+) as a cofactor.

It carries out the reaction Hydrolysis of DNA containing ring-opened 7-methylguanine residues, releasing 2,6-diamino-4-hydroxy-5-(N-methyl)formamidopyrimidine.. The enzyme catalyses 2'-deoxyribonucleotide-(2'-deoxyribose 5'-phosphate)-2'-deoxyribonucleotide-DNA = a 3'-end 2'-deoxyribonucleotide-(2,3-dehydro-2,3-deoxyribose 5'-phosphate)-DNA + a 5'-end 5'-phospho-2'-deoxyribonucleoside-DNA + H(+). Involved in base excision repair of DNA damaged by oxidation or by mutagenic agents. Acts as a DNA glycosylase that recognizes and removes damaged bases. Has a preference for oxidized purines, such as 7,8-dihydro-8-oxoguanine (8-oxoG). Has AP (apurinic/apyrimidinic) lyase activity and introduces nicks in the DNA strand. Cleaves the DNA backbone by beta-delta elimination to generate a single-strand break at the site of the removed base with both 3'- and 5'-phosphates. In Dichelobacter nodosus (strain VCS1703A), this protein is Formamidopyrimidine-DNA glycosylase.